The chain runs to 551 residues: Glucans biosynthesis protein D (551 aa).

The segment at residues 1-32 (MNRRRFLQGSLAMAALSGTTGLSTLFSRAAFA) is a signal peptide (tat-type signal).

Belongs to the OpgD/OpgG family. Post-translationally, predicted to be exported by the Tat system. The position of the signal peptide cleavage has not been experimentally proven.

It localises to the periplasm. It participates in glycan metabolism; osmoregulated periplasmic glucan (OPG) biosynthesis. Probably involved in the control of the structural glucose backbone of osmoregulated periplasmic glucans (OPGs). This Enterobacter sp. (strain 638) protein is Glucans biosynthesis protein D.